The chain runs to 61 residues: Ferredoxin (61 aa).

In terms of domain architecture, 4Fe-4S ferredoxin-type spans 2 to 28 (LYITEECTYCGACEPECPTNAISAGSE). The [4Fe-4S] cluster site is built by Cys8, Cys11, Cys14, Cys18, Cys37, Cys40, Cys49, and Cys53.

The cofactor is [4Fe-4S] cluster.

Functionally, ferredoxins are iron-sulfur proteins that transfer electrons in a wide variety of metabolic reactions. This Chlorobaculum thiosulfatiphilum (Chlorobium limicola f.sp. thiosulfatophilum) protein is Ferredoxin.